Consider the following 212-residue polypeptide: MEENFFKLILITNKQQISVEEYLDFVCACVQSGVTSVQLREKELSYRELLGFGEALKSILDPLEIPLIVSDSVSVCLDLDATGVHLGQTDGDVIEARELLGSDKIIGWNVNTLDQLLNANTLPIDYLGLSAMFATQNKPDATNLWGFSGLEQAVSLCEHPIVAIGGIDESNASKVIDAGAAGIAAIGVFHSAQNPSSVTKALREIVDRGLRC.

Position 38–42 (38–42 (QLREK)) interacts with 4-amino-2-methyl-5-(diphosphooxymethyl)pyrimidine. Asp71 and Asp90 together coordinate Mg(2+). Position 138 (Lys138) interacts with 4-amino-2-methyl-5-(diphosphooxymethyl)pyrimidine. Residue Gly166 participates in 2-[(2R,5Z)-2-carboxy-4-methylthiazol-5(2H)-ylidene]ethyl phosphate binding.

The protein belongs to the thiamine-phosphate synthase family. Requires Mg(2+) as cofactor.

The catalysed reaction is 2-[(2R,5Z)-2-carboxy-4-methylthiazol-5(2H)-ylidene]ethyl phosphate + 4-amino-2-methyl-5-(diphosphooxymethyl)pyrimidine + 2 H(+) = thiamine phosphate + CO2 + diphosphate. It catalyses the reaction 2-(2-carboxy-4-methylthiazol-5-yl)ethyl phosphate + 4-amino-2-methyl-5-(diphosphooxymethyl)pyrimidine + 2 H(+) = thiamine phosphate + CO2 + diphosphate. It carries out the reaction 4-methyl-5-(2-phosphooxyethyl)-thiazole + 4-amino-2-methyl-5-(diphosphooxymethyl)pyrimidine + H(+) = thiamine phosphate + diphosphate. The protein operates within cofactor biosynthesis; thiamine diphosphate biosynthesis; thiamine phosphate from 4-amino-2-methyl-5-diphosphomethylpyrimidine and 4-methyl-5-(2-phosphoethyl)-thiazole: step 1/1. In terms of biological role, condenses 4-methyl-5-(beta-hydroxyethyl)thiazole monophosphate (THZ-P) and 2-methyl-4-amino-5-hydroxymethyl pyrimidine pyrophosphate (HMP-PP) to form thiamine monophosphate (TMP). The sequence is that of Thiamine-phosphate synthase from Chlamydia abortus (strain DSM 27085 / S26/3) (Chlamydophila abortus).